A 444-amino-acid polypeptide reads, in one-letter code: Docking protein 3 (444 aa).

Residues 7-123 (PVKDGILYQQ…WVDPICQLAF (117 aa)) form the PH domain. The residue at position 138 (S138) is a Phosphoserine. One can recognise an IRS-type PTB domain in the interval 157–261 (EVTEFPVIVQ…ARQRERLPEL (105 aa)). Position 274 is a phosphoserine (S274). A disordered region spans residues 278-299 (LEPPGELREVAPGFELPTPRKL). A phosphoserine mark is found at S308 and S314. Phosphotyrosine is present on Y325. Residues 354–390 (GLTNGGPEAQEGPPGGRSPLGSPIYHNTEDLSWPGSA) are disordered. Positions 358–376 (GGPEAQEGPPGGRSPLGSP) are enriched in low complexity. S371 bears the Phosphoserine mark.

Belongs to the DOK family. Type A subfamily. In terms of assembly, on tyrosine phosphorylation, interacts with CSK and INPP5D/SHIP1 via their SH2 domains. Both Tyr-325 and Tyr-343 are required for interaction with INPP5D. Only Tyr-325 is required for interaction with CSK. Binds ABL1 through the PTB domain and in a kinase-dependent manner. Does not interact with RasGAP. In terms of processing, constitutively tyrosine-phosphorylated. On IL2 stimulation, phosphorylated on C-terminal tyrosine residues possibly by Src kinases. Can also be phosphorylated by ABL1 kinase. Predominantly expressed in bone marrow, spleen and lung. Low levels in heart, brain, liver, muscle, thymus, kidney and testis. Highly expressed in B-cells and macrophages.

Its subcellular location is the cytoplasm. It localises to the cell membrane. Functionally, DOK proteins are enzymatically inert adaptor or scaffolding proteins. They provide a docking platform for the assembly of multimolecular signaling complexes. DOK3 is a negative regulator of JNK signaling in B-cells through interaction with INPP5D/SHIP1. May modulate ABL1 function. The chain is Docking protein 3 (Dok3) from Mus musculus (Mouse).